Consider the following 420-residue polypeptide: Hemojuvelin (420 aa).

Residues 1 to 32 (MGQSPSPRSPHGSPPTLSTLTLLLLLCGQAHS) form the signal peptide. At Tyr43 the chain carries Phosphotyrosine. N-linked (GlcNAc...) asparagine glycosylation is present at Asn111. The segment at 113–135 (SRQGPTAPPPARGPALPGAGPAP) is disordered. Residues 125–134 (GPALPGAGPA) show a composition bias toward low complexity. 2 disulfide bridges follow: Cys141/Cys223 and Cys160/Cys310. Asn206 and Asn365 each carry an N-linked (GlcNAc...) asparagine glycan. A lipid anchor (GPI-anchor amidated aspartate) is attached at Asp393. The propeptide at 394–420 (AGPPLSPAICLVPLLSALFVLWLCFSK) is removed in mature form.

Belongs to the repulsive guidance molecule (RGM) family. Interacts with BMP2 and BMP4. Interacts with BMP6. Interacts with BMPR1B. Interacts with TMPRSS6. Autocatalytically cleaved at low pH; the two chains remain linked via two disulfide bonds. Also proteolytically processed by TMPRSS6, several fragments being released in the extracellular space; regulates HJV activity in BMP signaling and thefore iron homeostasis. In terms of tissue distribution, muscle cell lineage.

The protein localises to the cell membrane. Its function is as follows. Acts as a bone morphogenetic protein (BMP) coreceptor. Through enhancement of BMP signaling regulates hepcidin (HAMP) expression and regulates iron homeostasis. This Mus musculus (Mouse) protein is Hemojuvelin.